The following is a 252-amino-acid chain: Imidazole glycerol phosphate synthase subunit HisF (252 aa).

Active-site residues include D11 and D130.

It belongs to the HisA/HisF family. In terms of assembly, heterodimer of HisH and HisF.

It localises to the cytoplasm. It carries out the reaction 5-[(5-phospho-1-deoxy-D-ribulos-1-ylimino)methylamino]-1-(5-phospho-beta-D-ribosyl)imidazole-4-carboxamide + L-glutamine = D-erythro-1-(imidazol-4-yl)glycerol 3-phosphate + 5-amino-1-(5-phospho-beta-D-ribosyl)imidazole-4-carboxamide + L-glutamate + H(+). It participates in amino-acid biosynthesis; L-histidine biosynthesis; L-histidine from 5-phospho-alpha-D-ribose 1-diphosphate: step 5/9. Its function is as follows. IGPS catalyzes the conversion of PRFAR and glutamine to IGP, AICAR and glutamate. The HisF subunit catalyzes the cyclization activity that produces IGP and AICAR from PRFAR using the ammonia provided by the HisH subunit. This Pelotomaculum thermopropionicum (strain DSM 13744 / JCM 10971 / SI) protein is Imidazole glycerol phosphate synthase subunit HisF.